Here is a 324-residue protein sequence, read N- to C-terminus: Malate dehydrogenase (324 aa).

Residues 20–25 (GAGNVG) and Asp-44 contribute to the NAD(+) site. Substrate is bound by residues Arg-93 and Arg-99. Residues Asn-106 and 129 to 131 (VTN) each bind NAD(+). Substrate contacts are provided by Asn-131 and Arg-162. His-186 functions as the Proton acceptor in the catalytic mechanism.

Belongs to the LDH/MDH superfamily. MDH type 3 family.

It catalyses the reaction (S)-malate + NAD(+) = oxaloacetate + NADH + H(+). Functionally, catalyzes the reversible oxidation of malate to oxaloacetate. This chain is Malate dehydrogenase, found in Synechocystis sp. (strain ATCC 27184 / PCC 6803 / Kazusa).